The following is a 126-amino-acid chain: Small ribosomal subunit protein uS13 (126 aa).

The interval 91-126 (HRAGLPVRGQRTRTNSRTRRSAKRTVAGKKKAPSKK) is disordered. The span at 100-126 (QRTRTNSRTRRSAKRTVAGKKKAPSKK) shows a compositional bias: basic residues.

Belongs to the universal ribosomal protein uS13 family. Part of the 30S ribosomal subunit. Forms a loose heterodimer with protein S19. Forms two bridges to the 50S subunit in the 70S ribosome.

Functionally, located at the top of the head of the 30S subunit, it contacts several helices of the 16S rRNA. In the 70S ribosome it contacts the 23S rRNA (bridge B1a) and protein L5 of the 50S subunit (bridge B1b), connecting the 2 subunits; these bridges are implicated in subunit movement. Contacts the tRNAs in the A and P-sites. This chain is Small ribosomal subunit protein uS13, found in Acaryochloris marina (strain MBIC 11017).